The following is a 506-amino-acid chain: Apolipoprotein N-acyltransferase (506 aa).

The next 6 membrane-spanning stretches (helical) occupy residues 24-44, 58-78, 85-105, 125-145, 162-182, and 192-212; these read LALAPFDFWPLVLVSVAMFYL, GWCYGFGLYGAGTSWIYVSIH, ALLAGLLMLLFIAAIALFFAL, LAFAALWLWQEAFRGWFLTGF, LAPVGGVWLISFALGLTAALL, and KSFLAMGVLLLLAPWVAGLAL. The region spanning 230–470 is the CN hydrolase domain; it reads MQGNIEQSMK…RGVLYGEVVP (241 aa). Glu-269 (proton acceptor) is an active-site residue. Lys-330 is a catalytic residue. Cys-382 serves as the catalytic Nucleophile. Residues 482-502 traverse the membrane as a helical segment; the sequence is SWPLAIVCLLLFGWALLAARI.

This sequence belongs to the CN hydrolase family. Apolipoprotein N-acyltransferase subfamily.

It is found in the cell inner membrane. The catalysed reaction is N-terminal S-1,2-diacyl-sn-glyceryl-L-cysteinyl-[lipoprotein] + a glycerophospholipid = N-acyl-S-1,2-diacyl-sn-glyceryl-L-cysteinyl-[lipoprotein] + a 2-acyl-sn-glycero-3-phospholipid + H(+). It participates in protein modification; lipoprotein biosynthesis (N-acyl transfer). Catalyzes the phospholipid dependent N-acylation of the N-terminal cysteine of apolipoprotein, the last step in lipoprotein maturation. This Pseudomonas syringae pv. tomato (strain ATCC BAA-871 / DC3000) protein is Apolipoprotein N-acyltransferase.